The sequence spans 567 residues: Hydrogenase-2 large chain (567 aa).

Residues cysteine 61, cysteine 64, cysteine 546, and cysteine 549 each coordinate Ni(2+). Positions 553 to 567 (VVDADGNEVVSVKVL) are excised as a propeptide.

This sequence belongs to the [NiFe]/[NiFeSe] hydrogenase large subunit family. As to quaternary structure, heterodimer of a large and a small subunit. It depends on Ni(2+) as a cofactor.

The protein resides in the cell membrane. It catalyses the reaction H2 + A = AH2. This is one of three E.coli hydrogenases synthesized in response to different physiological conditions. HYD2 is involved in hydrogen uptake. The sequence is that of Hydrogenase-2 large chain (hybC) from Escherichia coli O157:H7.